The chain runs to 119 residues: Immunoglobulin heavy variable 3-49 (119 aa).

The signal sequence occupies residues 1-19; it reads MEFGLSWVFLVAILKGVQC. A framework-1 region spans residues 20-44; that stretch reads EVQLVESGGGLVQPGRSLRLSCTAS. The region spanning 20–119 is the Ig-like domain; the sequence is EVQLVESGGG…EDTAVYYCTR (100 aa). A disulfide bridge connects residues Cys-41 and Cys-117. The tract at residues 45–52 is complementarity-determining-1; the sequence is GFTFGDYA. Positions 53–69 are framework-2; it reads MSWVRQAPGKGLEWVGF. The complementarity-determining-2 stretch occupies residues 70–79; that stretch reads IRSKAYGGTT. Positions 80-117 are framework-3; sequence EYAASVKGRFTISRDDSKSIAYLQMNSLKTEDTAVYYC. The interval 118-119 is complementarity-determining-3; it reads TR.

Immunoglobulins are composed of two identical heavy chains and two identical light chains; disulfide-linked.

The protein resides in the secreted. It localises to the cell membrane. V region of the variable domain of immunoglobulin heavy chains that participates in the antigen recognition. Immunoglobulins, also known as antibodies, are membrane-bound or secreted glycoproteins produced by B lymphocytes. In the recognition phase of humoral immunity, the membrane-bound immunoglobulins serve as receptors which, upon binding of a specific antigen, trigger the clonal expansion and differentiation of B lymphocytes into immunoglobulins-secreting plasma cells. Secreted immunoglobulins mediate the effector phase of humoral immunity, which results in the elimination of bound antigens. The antigen binding site is formed by the variable domain of one heavy chain, together with that of its associated light chain. Thus, each immunoglobulin has two antigen binding sites with remarkable affinity for a particular antigen. The variable domains are assembled by a process called V-(D)-J rearrangement and can then be subjected to somatic hypermutations which, after exposure to antigen and selection, allow affinity maturation for a particular antigen. The protein is Immunoglobulin heavy variable 3-49 of Homo sapiens (Human).